Reading from the N-terminus, the 323-residue chain is Zinc finger C2HC domain-containing protein 1A (323 aa).

The C2HC/C3H-type 1 zinc-finger motif lies at 14–43 (ELLPCKICGRTFFPVALKKHGPICQKTATK). Zn(2+)-binding residues include Cys-18, Cys-21, His-33, and Cys-37. Positions 42–81 (TKKRKTFDSSRQRAEGTDIPTVKPLKPRPEPPKKPSNWRR) are disordered. Residues 47 to 57 (TFDSSRQRAEG) are compositionally biased toward basic and acidic residues. The segment at 117–146 (DYIQCPYCQRRFNENAADRHINFCKEQAAR) adopts a C2HC/C3H-type 2 zinc-finger fold. The Zn(2+) site is built by Cys-121, Cys-124, His-136, and Cys-140. Residues 149-258 (NKGKFSTDTK…NPASGVLTSK (110 aa)) form a disordered region. The segment covering 177–197 (SPGTTSSGSSRLPQPSGTSKT) has biased composition (polar residues). The span at 198-214 (VVGAPSGKVSSVSSSSG) shows a compositional bias: low complexity. Residue Ser-221 is modified to Phosphoserine. Residue Thr-242 is modified to Phosphothreonine. A Phosphoserine modification is found at Ser-290.

It belongs to the ZC2HC1 family. Zn(2+) serves as cofactor.

The chain is Zinc finger C2HC domain-containing protein 1A (ZC2HC1A) from Bos taurus (Bovine).